Reading from the N-terminus, the 187-residue chain is Phosphatidylethanolamine-binding protein 1 (187 aa).

N-acetylalanine; in peptide hippocampal cholinergic neurostimulating is present on Ala-2. Ser-6 carries the phosphoserine modification. Position 42 is a phosphothreonine (Thr-42). Phosphoserine occurs at positions 51, 52, 54, 98, and 132. Residues 93-134 (KGNDISSGTVLSDYVGSGPPSGTGLHRYVWLVYEQEQPLSCD) form an interaction with RAF1 region.

This sequence belongs to the phosphatidylethanolamine-binding protein family. In terms of assembly, has a tendency to form dimers by disulfide cross-linking. Interacts with RAF1 and this interaction is enhanced if RAF1 is phosphorylated on residues 'Ser-338', 'Ser-339', 'Tyr-340' and 'Tyr-341'. Interacts with ALOX15; in response to IL13/interleukin-13, prevents the interaction of PEBP1 with RAF1 to activate the ERK signaling cascade. HCNP is expressed in brain. Increased expression in aged senescence-accelerated mice.

It is found in the cytoplasm. In terms of biological role, binds ATP, opioids and phosphatidylethanolamine. Has lower affinity for phosphatidylinositol and phosphatidylcholine. Serine protease inhibitor which inhibits thrombin, neuropsin and chymotrypsin but not trypsin, tissue type plasminogen activator and elastase. Inhibits the kinase activity of RAF1 by inhibiting its activation and by dissociating the RAF1/MEK complex and acting as a competitive inhibitor of MEK phosphorylation. HCNP may be involved in the function of the presynaptic cholinergic neurons of the central nervous system. HCNP increases the production of choline acetyltransferase but not acetylcholinesterase. Seems to be mediated by a specific receptor. The polypeptide is Phosphatidylethanolamine-binding protein 1 (Pebp1) (Mus musculus (Mouse)).